A 784-amino-acid chain; its full sequence is Transcription factor Sp1 (784 aa).

Positions methionine 1–leucine 95 are disordered. At serine 2 the chain carries N-acetylserine. 2 positions are modified to phosphoserine: serine 2 and serine 7. Positions serine 2–glutamine 84 are repressor domain. Lysine 16 is covalently cross-linked (Glycyl lysine isopeptide (Lys-Gly) (interchain with G-Cter in SUMO); alternate). Residue lysine 16 forms a Glycyl lysine isopeptide (Lys-Gly) (interchain with G-Cter in SUMO2); alternate linkage. Residues glycine 23–alanine 34 show a composition bias toward gly residues. A compositionally biased stretch (low complexity) spans serine 37–serine 49. Residue serine 61 is modified to Phosphoserine. Residues glutamate 74–serine 87 are compositionally biased toward low complexity. Serine 103 carries the post-translational modification Phosphoserine; by ATM. Residues isoleucine 111–glutamine 125 show a composition bias toward polar residues. Residues isoleucine 111–valine 144 are disordered. Positions serine 126–serine 138 are enriched in low complexity. A transactivation domain A (Gln-rich) region spans residues glutamine 148 to glutamine 253. The segment at asparagine 263–threonine 497 is transactivation domain B (Gln-rich). Position 280 is a phosphothreonine; by MAPK8 (threonine 280). Disordered regions lie at residues serine 282 to serine 303 and threonine 333 to glutamine 398. Low complexity-rich tracts occupy residues threonine 344–threonine 357 and glutamine 373–glutamine 398. Threonine 455 carries the post-translational modification Phosphothreonine; by MAPK1 and MAPK3. The 9aaTAD signature appears at valine 464–glutamine 472. O-linked (GlcNAc) serine glycosylation occurs at serine 493. The transactivation domain C (highly charged) stretch occupies residues serine 498–lysine 611. A disordered region spans residues glutamine 566–arginine 598. Serine 613 is subject to Phosphoserine; alternate. O-linked (GlcNAc) serine; alternate glycosylation is present at serine 613. The tract at residues aspartate 620–phenylalanine 784 is VZV IE62-binding. C2H2-type zinc fingers lie at residues histidine 627–proline 656, phenylalanine 657–lysine 686, and phenylalanine 687–glycine 714. Threonine 641 bears the Phosphothreonine; alternate mark. Threonine 641 is a glycosylation site (O-linked (GlcNAc) threonine; alternate). O-linked (GlcNAc) serine; alternate glycosylation occurs at serine 642. Serine 642 carries the post-translational modification Phosphoserine; by PKC/PRKCZ; alternate. Threonine 652 bears the Phosphothreonine; by PKC/PRKCZ mark. The residue at position 669 (threonine 669) is a Phosphothreonine. Phosphoserine; by PKC/PRKCZ is present on serine 671. Threonine 682 bears the Phosphothreonine; by PKC/PRKCZ mark. A phosphoserine; alternate mark is found at serine 699 and serine 703. Residues serine 699 and serine 703 are each glycosylated (O-linked (GlcNAc) serine; alternate). Residue lysine 704 is modified to N6-acetyllysine. The tract at residues histidine 709–phenylalanine 784 is domain D. The residue at position 738 (threonine 738) is a Phosphothreonine; by MAPK1, MAPK3 and MAPK8.

Belongs to the Sp1 C2H2-type zinc-finger protein family. As to quaternary structure, interacts with ATF7IP, ATF7IP2, BAHD1, POGZ, HCFC1, AATF and PHC2. Interacts with SV40 VP2/3 proteins. Interacts with SV40 major capsid protein VP1; this interaction leads to a cooperativity between the 2 proteins in DNA binding. Interacts with HLTF; the interaction may be required for basal transcriptional activity of HLTF. Interacts (deacetylated form) with EP300; the interaction enhances gene expression. Interacts with HDAC1 and JUN. Interacts with ELF1; the interaction is inhibited by glycosylation of SP1. Interaction with NFYA; the interaction is inhibited by glycosylation of SP1. Interacts with SMARCA4/BRG1. Interacts with ATF7IP and TBP. Interacts with MEIS2 isoform 4 and PBX1 isoform PBX1a. Interacts with EGR1. Interacts with RNF112 in an oxidative stress-regulated manner. Interacts with ZBTB7A; ZBTB7A prevents the binding to GC-rich motifs in promoters and represses the transcriptional activity of SP1. Interacts with DDX3X; this interaction potentiates SP1-induced CDKN1A/WAF1/CIP1 transcription. Interacts with MSX1; the interaction may inhibit MSX1 autoinactivation. Interacts with MSX3. In terms of assembly, (Microbial infection) Interacts with murine minute virus NS1; this interaction allows high levels of viral P38 promoter transactivation by NS1. In terms of processing, phosphorylated on multiple serine and threonine residues. Phosphorylation is coupled to ubiquitination, sumoylation and proteolytic processing. Phosphorylation on Ser-61 enhances proteolytic cleavage. Phosphorylation on Ser-7 enhances ubiquitination and protein degradation. Hyperphosphorylation on Ser-103 in response to DNA damage has no effect on transcriptional activity. MAPK1/MAPK3-mediated phosphorylation on Thr-455 and Thr-738 enhances VEGF transcription but, represses FGF2-triggered PDGFR-alpha transcription. Also implicated in the repression of RECK by ERBB2. Hyperphosphorylated on Thr-280 and Thr-738 during mitosis by MAPK8 shielding SP1 from degradation by the ubiquitin-dependent pathway. Phosphorylated in the zinc-finger domain by calmodulin-activated PKCzeta. Phosphorylation on Ser-642 by PKCzeta is critical for TSA-activated LHR gene expression through release of its repressor, p107. Phosphorylation on Thr-669, Ser-671 and Thr-682 is stimulated by angiotensin II via the AT1 receptor inducing increased binding to the PDGF-D promoter. This phosphorylation is increased in injured artey wall. Ser-61 and Thr-682 can both be dephosphorylated by PP2A during cell-cycle interphase. Dephosphorylation on Ser-61 leads to increased chromatin association during interphase and increases the transcriptional activity. On insulin stimulation, sequentially glycosylated and phosphorylated on several C-terminal serine and threonine residues. Post-translationally, acetylated. Acetylation/deacetylation events affect transcriptional activity. Deacetylation leads to an increase in the expression of the 12(s)-lipooxygenase gene through recruitment of p300 to the promoter. Deacetylated by HDAC6 which leads to increased expression of ENG and positive regulation of angiogenesis. Ubiquitinated. Ubiquitination occurs on the C-terminal proteolytically-cleaved peptide and is triggered by phosphorylation. In terms of processing, sumoylated with SUMO1. Sumoylation modulates proteolytic cleavage of the N-terminal repressor domain. Sumoylation levels are attenuated during tumorigenesis. Phosphorylation mediates SP1 desumoylation. Post-translationally, proteolytic cleavage in the N-terminal repressor domain is prevented by sumoylation. The C-terminal cleaved product is susceptible to degradation. O-glycosylated; Contains 8 N-acetylglucosamine side chains. Levels are controlled by insulin and the SP1 phosphorylation states. Insulin-mediated O-glycosylation locates SP1 to the nucleus, where it is sequentially deglycosylated and phosphorylated. O-glycosylation affects transcriptional activity through disrupting the interaction with a number of transcription factors including ELF1 and NFYA. Inhibited by peroxisomome proliferator receptor gamma (PPARgamma).

Its subcellular location is the nucleus. The protein resides in the cytoplasm. Its function is as follows. Transcription factor that can activate or repress transcription in response to physiological and pathological stimuli. Binds with high affinity to GC-rich motifs and regulates the expression of a large number of genes involved in a variety of processes such as cell growth, apoptosis, differentiation and immune responses. Highly regulated by post-translational modifications (phosphorylations, sumoylation, proteolytic cleavage, glycosylation and acetylation). Also binds the PDGFR-alpha G-box promoter. May have a role in modulating the cellular response to DNA damage. Implicated in chromatin remodeling. Plays a role in the recruitment of SMARCA4/BRG1 on the c-FOS promoter Plays an essential role in the regulation of FE65 gene expression. Positively regulates the transcription of the core clock component BMAL1. Plays a role in protecting cells against oxidative stress following brain injury by regulating the expression of RNF112. The sequence is that of Transcription factor Sp1 (Sp1) from Mus musculus (Mouse).